The sequence spans 486 residues: Glutamyl-tRNA(Gln) amidotransferase subunit A (486 aa).

Active-site charge relay system residues include lysine 74 and serine 149. The active-site Acyl-ester intermediate is the serine 173.

The protein belongs to the amidase family. GatA subfamily. Heterotrimer of A, B and C subunits.

The catalysed reaction is L-glutamyl-tRNA(Gln) + L-glutamine + ATP + H2O = L-glutaminyl-tRNA(Gln) + L-glutamate + ADP + phosphate + H(+). Its function is as follows. Allows the formation of correctly charged Gln-tRNA(Gln) through the transamidation of misacylated Glu-tRNA(Gln) in organisms which lack glutaminyl-tRNA synthetase. The reaction takes place in the presence of glutamine and ATP through an activated gamma-phospho-Glu-tRNA(Gln). The polypeptide is Glutamyl-tRNA(Gln) amidotransferase subunit A (Prochlorococcus marinus (strain MIT 9313)).